The sequence spans 326 residues: tRNA(Ile)-lysidine synthase (326 aa).

S33–S38 provides a ligand contact to ATP.

This sequence belongs to the tRNA(Ile)-lysidine synthase family.

Its subcellular location is the cytoplasm. The catalysed reaction is cytidine(34) in tRNA(Ile2) + L-lysine + ATP = lysidine(34) in tRNA(Ile2) + AMP + diphosphate + H(+). Its function is as follows. Ligates lysine onto the cytidine present at position 34 of the AUA codon-specific tRNA(Ile) that contains the anticodon CAU, in an ATP-dependent manner. Cytidine is converted to lysidine, thus changing the amino acid specificity of the tRNA from methionine to isoleucine. The polypeptide is tRNA(Ile)-lysidine synthase (Novosphingobium aromaticivorans (strain ATCC 700278 / DSM 12444 / CCUG 56034 / CIP 105152 / NBRC 16084 / F199)).